The sequence spans 437 residues: MKPLIALVGRPNVGKSTLFNRILRQKSAIVDPTPGVTRDRHISPGEWQGKQFLLMDTGGYAPENDTLSKAMLEQTMRAIEDADAVIFIVDARSGLTYLDLDIAKILQKTFKDKKIFFVANKVDNPQVALEAQSLVKSGFTEPYLISARDGAGVADMLEDVLNSLPCPEGEEIEEDDSIKLAVLGRPNVGKSSLVNALLGTERHIVSDVPGTTRDAIDSVLKRNGEEYVLIDTAGLRKRTKIDAGIEFYSSLRTARAIERCDVALVLLDARLGLESQDMKIIHMAIERKKGVLILVNKWDLVEKDSKTSKAFTDNLQNQLGNIGYIPVIFTSALTKKNCYRAIDTAAEIALNRRQKISTSNLNRFLQETLTMRHPATKSGKELKIKYMTQIDSDHPVFAFFCNDPELLENNFRRFLEKRLRESFDFAGIPITMRFLRK.

EngA-type G domains are found at residues 3-168 (PLIA…PCPE) and 178-353 (IKLA…LNRR). Residues 9–16 (GRPNVGKS), 56–60 (DTGGY), 120–123 (NKVD), 184–191 (GRPNVGKS), 231–235 (DTAGL), and 296–299 (NKWD) each bind GTP. The KH-like domain occupies 354-437 (QKISTSNLNR…IPITMRFLRK (84 aa)).

Belongs to the TRAFAC class TrmE-Era-EngA-EngB-Septin-like GTPase superfamily. EngA (Der) GTPase family. In terms of assembly, associates with the 50S ribosomal subunit.

Functionally, GTPase that plays an essential role in the late steps of ribosome biogenesis. In Chlorobaculum tepidum (strain ATCC 49652 / DSM 12025 / NBRC 103806 / TLS) (Chlorobium tepidum), this protein is GTPase Der.